Here is a 73-residue protein sequence, read N- to C-terminus: Beta-defensin 50 (73 aa).

Residues 1-23 (MKTLHLLLLISGLLSVFVKGVGS) form the signal peptide. Disulfide bonds link Cys34–Cys63 and Cys46–Cys64.

Belongs to the beta-defensin family.

It localises to the secreted. In terms of biological role, has bactericidal activity. This chain is Beta-defensin 50 (Defb50), found in Rattus norvegicus (Rat).